The chain runs to 169 residues: Nucleoside diphosphate kinase 3 (169 aa).

The ADP site is built by Lys29, Arg105, Thr111, Arg122, Val129, and Asn132. Catalysis depends on His135, which acts as the Pros-phosphohistidine intermediate.

The protein belongs to the NDK family. In terms of assembly, homohexamer. It depends on Mg(2+) as a cofactor.

The protein resides in the mitochondrion outer membrane. The protein localises to the cytoplasm. It is found in the cytoskeleton. It localises to the cilium basal body. It carries out the reaction a 2'-deoxyribonucleoside 5'-diphosphate + ATP = a 2'-deoxyribonucleoside 5'-triphosphate + ADP. The catalysed reaction is a ribonucleoside 5'-diphosphate + ATP = a ribonucleoside 5'-triphosphate + ADP. Its function is as follows. Catalyzes the phosphorylation of ribonucleosides and deoxyribonucleoside diphosphates, other than ATP, into the corresponding triphosphates with ATP as the major phosphate donor. The ATP gamma phosphate is transferred to the nucleoside diphosphate beta phosphate via a ping-pong mechanism, using a phosphorylated active-site intermediate. Through the catalyzed exchange of gamma-phosphate between di- and triphosphonucleosides participates in regulation of intracellular nucleotide homeostasis. Required for ciliary function during renal development. Functionally, independently of its kinase activity, facilitates mitochondrial tethering prior to membrane fusion through its direct membrane-binding and hexamerization. Implicated in repair of both single- and double-stranded breaks in DNA, independently of its kinase activity. This Danio rerio (Zebrafish) protein is Nucleoside diphosphate kinase 3.